Consider the following 312-residue polypeptide: Glyoxylate/hydroxypyruvate reductase A (312 aa).

The active site involves arginine 227. The active-site Proton donor is the histidine 275.

This sequence belongs to the D-isomer specific 2-hydroxyacid dehydrogenase family. GhrA subfamily.

The protein resides in the cytoplasm. The enzyme catalyses glycolate + NADP(+) = glyoxylate + NADPH + H(+). It carries out the reaction (R)-glycerate + NAD(+) = 3-hydroxypyruvate + NADH + H(+). The catalysed reaction is (R)-glycerate + NADP(+) = 3-hydroxypyruvate + NADPH + H(+). In terms of biological role, catalyzes the NADPH-dependent reduction of glyoxylate and hydroxypyruvate into glycolate and glycerate, respectively. This Escherichia coli (strain 55989 / EAEC) protein is Glyoxylate/hydroxypyruvate reductase A.